Reading from the N-terminus, the 90-residue chain is Putative defensin-like protein 64 (90 aa).

A signal peptide spans 1 to 23 (MWGRQIVLKIFFLVLSCVIVIET). Disulfide bonds link Cys33-Cys56 and Cys42-Cys77.

Belongs to the DEFL family.

The protein localises to the secreted. The chain is Putative defensin-like protein 64 from Arabidopsis thaliana (Mouse-ear cress).